We begin with the raw amino-acid sequence, 520 residues long: Peptidoglycan-recognition protein LC (520 aa).

Composition is skewed to polar residues over residues 1-14 (MPFS…QCSN) and 27-36 (KNCSTSSTDS). Disordered stretches follow at residues 1–78 (MPFS…RISV) and 239–278 (DKWK…AQTP). Over 1–291 (MPFSNETEMS…PFLPNTVGRK (291 aa)) the chain is Cytoplasmic. 2 stretches are compositionally biased toward basic and acidic residues: residues 48–58 (RPEKETKDRGT) and 66–78 (KSEE…RISV). The helical; Signal-anchor for type II membrane protein transmembrane segment at 292-312 (AVTVTVVFVTLTFLLGIVLAT) threads the bilayer. Over 313-520 (TTNLFGKTLN…ASFANWTHWS (208 aa)) the chain is Extracellular. N389 carries an N-linked (GlcNAc...) asparagine glycan. C390 and C396 are oxidised to a cystine. Positions 412–490 (QKCDIAYNFL…KLGKIAPSYR (79 aa)) constitute an N-acetylmuramoyl-L-alanine amidase domain. N-linked (GlcNAc...) asparagine glycosylation is present at N515.

Belongs to the N-acetylmuramoyl-L-alanine amidase 2 family. Post-translationally, proteolytically cleaved, probably by a metaloprotease such as Mmp2; proteolytic cleavage leads to activation of the imd/Relish signaling pathway. As to expression, expressed in the fat body and hemocytes.

The protein localises to the membrane. Its activity is regulated as follows. Activated by proteolytic cleavage in response to Gram-negative bacterial infection; cleavage may be mediated by endogenous proteases, such as the metalloprotease Mmp2 or elastase, or by bacterially expressed proteases such as the surface serine protease OmpT. Major activator of the imd/Relish pathway and is likely to encode a pattern recognition molecule for the humoral immune response. Required for Relish processing and nuclear translocation following proteolytic cleavage. Involved in the response to lipopolysaccharide (LPS) and peptidoglycan of Gram-negative bacteria. The different isoforms probably display different recognition capabilities to various microbial patterns. In terms of biological role, mediates the response to LPS and Gram-negative bacteria. Its function is as follows. Mediates the response to LPS, peptidoglycan and Gram-negative bacteria. In Drosophila melanogaster (Fruit fly), this protein is Peptidoglycan-recognition protein LC (PGRP-LC).